The sequence spans 314 residues: 4-hydroxy-3-methylbut-2-enyl diphosphate reductase (314 aa).

[4Fe-4S] cluster is bound at residue cysteine 12. Residues histidine 41 and histidine 74 each contribute to the (2E)-4-hydroxy-3-methylbut-2-enyl diphosphate site. Residues histidine 41 and histidine 74 each contribute to the dimethylallyl diphosphate site. Residues histidine 41 and histidine 74 each coordinate isopentenyl diphosphate. A [4Fe-4S] cluster-binding site is contributed by cysteine 96. (2E)-4-hydroxy-3-methylbut-2-enyl diphosphate is bound at residue histidine 124. Residue histidine 124 coordinates dimethylallyl diphosphate. Position 124 (histidine 124) interacts with isopentenyl diphosphate. The active-site Proton donor is glutamate 126. Threonine 168 serves as a coordination point for (2E)-4-hydroxy-3-methylbut-2-enyl diphosphate. Cysteine 198 lines the [4Fe-4S] cluster pocket. Residues serine 226, serine 227, asparagine 228, and serine 270 each coordinate (2E)-4-hydroxy-3-methylbut-2-enyl diphosphate. Positions 226, 227, 228, and 270 each coordinate dimethylallyl diphosphate. Positions 226, 227, 228, and 270 each coordinate isopentenyl diphosphate.

This sequence belongs to the IspH family. It depends on [4Fe-4S] cluster as a cofactor.

The enzyme catalyses isopentenyl diphosphate + 2 oxidized [2Fe-2S]-[ferredoxin] + H2O = (2E)-4-hydroxy-3-methylbut-2-enyl diphosphate + 2 reduced [2Fe-2S]-[ferredoxin] + 2 H(+). It carries out the reaction dimethylallyl diphosphate + 2 oxidized [2Fe-2S]-[ferredoxin] + H2O = (2E)-4-hydroxy-3-methylbut-2-enyl diphosphate + 2 reduced [2Fe-2S]-[ferredoxin] + 2 H(+). Its pathway is isoprenoid biosynthesis; dimethylallyl diphosphate biosynthesis; dimethylallyl diphosphate from (2E)-4-hydroxy-3-methylbutenyl diphosphate: step 1/1. It participates in isoprenoid biosynthesis; isopentenyl diphosphate biosynthesis via DXP pathway; isopentenyl diphosphate from 1-deoxy-D-xylulose 5-phosphate: step 6/6. Its function is as follows. Catalyzes the conversion of 1-hydroxy-2-methyl-2-(E)-butenyl 4-diphosphate (HMBPP) into a mixture of isopentenyl diphosphate (IPP) and dimethylallyl diphosphate (DMAPP). Acts in the terminal step of the DOXP/MEP pathway for isoprenoid precursor biosynthesis. This chain is 4-hydroxy-3-methylbut-2-enyl diphosphate reductase, found in Pseudomonas aeruginosa (strain ATCC 15692 / DSM 22644 / CIP 104116 / JCM 14847 / LMG 12228 / 1C / PRS 101 / PAO1).